The chain runs to 246 residues: Ubiquinone/menaquinone biosynthesis C-methyltransferase UbiE (246 aa).

S-adenosyl-L-methionine is bound by residues T75, D95, and 119 to 120 (DA).

This sequence belongs to the class I-like SAM-binding methyltransferase superfamily. MenG/UbiE family.

It carries out the reaction a 2-demethylmenaquinol + S-adenosyl-L-methionine = a menaquinol + S-adenosyl-L-homocysteine + H(+). The catalysed reaction is a 2-methoxy-6-(all-trans-polyprenyl)benzene-1,4-diol + S-adenosyl-L-methionine = a 5-methoxy-2-methyl-3-(all-trans-polyprenyl)benzene-1,4-diol + S-adenosyl-L-homocysteine + H(+). The protein operates within quinol/quinone metabolism; menaquinone biosynthesis; menaquinol from 1,4-dihydroxy-2-naphthoate: step 2/2. Its pathway is cofactor biosynthesis; ubiquinone biosynthesis. Its function is as follows. Methyltransferase required for the conversion of demethylmenaquinol (DMKH2) to menaquinol (MKH2) and the conversion of 2-polyprenyl-6-methoxy-1,4-benzoquinol (DDMQH2) to 2-polyprenyl-3-methyl-6-methoxy-1,4-benzoquinol (DMQH2). The chain is Ubiquinone/menaquinone biosynthesis C-methyltransferase UbiE from Desulfotalea psychrophila (strain LSv54 / DSM 12343).